The sequence spans 149 residues: UPF0178 protein CPF_2548 (149 aa).

This sequence belongs to the UPF0178 family.

This Clostridium perfringens (strain ATCC 13124 / DSM 756 / JCM 1290 / NCIMB 6125 / NCTC 8237 / Type A) protein is UPF0178 protein CPF_2548.